A 206-amino-acid polypeptide reads, in one-letter code: Ribosomal RNA small subunit methyltransferase G (206 aa).

S-adenosyl-L-methionine contacts are provided by residues Gly71, Phe76, 122–123, and Arg135; that span reads AE.

It belongs to the methyltransferase superfamily. RNA methyltransferase RsmG family.

The protein localises to the cytoplasm. Its function is as follows. Specifically methylates the N7 position of a guanine in 16S rRNA. In Bacteroides thetaiotaomicron (strain ATCC 29148 / DSM 2079 / JCM 5827 / CCUG 10774 / NCTC 10582 / VPI-5482 / E50), this protein is Ribosomal RNA small subunit methyltransferase G.